The sequence spans 910 residues: Putative disease resistance protein At1g58400 (910 aa).

The stretch at 15–57 forms a coiled coil; sequence DRLTQEYEQFQGVEDRIAELKSNLNLLKSFLKDAEAKKNTSQM. The NB-ARC domain maps to 148–460; the sequence is REREMRQTFS…AEGILEPRHY (313 aa). 191–198 serves as a coordination point for ATP; the sequence is GMGGLGKT. 2 LRR repeats span residues 580 to 604 and 605 to 628; these read LELL…GIGK and LIHL…LGNL.

Belongs to the disease resistance NB-LRR family.

In terms of biological role, potential disease resistance protein. The sequence is that of Putative disease resistance protein At1g58400 from Arabidopsis thaliana (Mouse-ear cress).